We begin with the raw amino-acid sequence, 72 residues long: Arrestin-E (72 aa).

The protein belongs to the arrestin family. Adrenal, cerebral cortex, heart, hypothalamus, intestine, liver, lung, pituitary, retina and testis.

This is Arrestin-E (Ear) from Rattus norvegicus (Rat).